A 214-amino-acid polypeptide reads, in one-letter code: Homologous-pairing protein 2 homolog (214 aa).

Residues 79 to 147 (SDSELKDLDA…EHKLTNIKSA (69 aa)) are a coiled coil. The interval 115–179 (TSSLTTEEML…WKKRKRMATD (65 aa)) is DNA-binding.

The protein belongs to the HOP2 family.

It is found in the nucleus. In terms of biological role, plays an important role in meiotic recombination. Stimulates DMC1-mediated strand exchange required for pairing of homologous chromosomes during meiosis. The polypeptide is Homologous-pairing protein 2 homolog (psmc3ip) (Xenopus laevis (African clawed frog)).